The sequence spans 322 residues: CMP-sialic acid transporter 1 (322 aa).

Topologically, residues 1 to 2 are cytoplasmic; that stretch reads MQ. A helical membrane pass occupies residues 3 to 23; the sequence is WYLVAALLTVLTSSQGILTTL. At 24 to 33 the chain is on the lumenal side; that stretch reads SQSNGKYKYD. A helical transmembrane segment spans residues 34-54; the sequence is YATIPFLAELFKLSFSSFFLW. At 55 to 75 the chain is on the cytoplasmic side; sequence KECQSSSPPRMTKEWRSIRLY. A helical transmembrane segment spans residues 76-96; the sequence is LVPSVIYLIHNNVQFATLTYV. Residues 97 to 100 are Lumenal-facing; it reads DPST. A helical transmembrane segment spans residues 101–120; it reads YQIMGNLKIVTTGILFRLVL. Over 121–126 the chain is Cytoplasmic; that stretch reads KRKLSN. A helical transmembrane segment spans residues 127-144; that stretch reads LQWMAVVLLAVGTTTSQV. Residues 145 to 157 are Lumenal-facing; it reads KGCGDAPCDSLFS. The helical transmembrane segment at 158–178 threads the bilayer; the sequence is APFQGYMLGILSACLSALAGV. The Cytoplasmic portion of the chain corresponds to 179-198; that stretch reads YTEYLMKKNNDSLYWQNVQL. A helical membrane pass occupies residues 199 to 219; it reads YTFGVIFNMGWLIYGDFKAGF. The Lumenal segment spans residues 220–233; the sequence is ERGPWWQRLFNGYS. The helical transmembrane segment at 234–254 threads the bilayer; the sequence is ITTWMVVFNLGSTGLLVSWLM. Residues 255–262 are Cytoplasmic-facing; that stretch reads KYSDNIVK. A helical transmembrane segment spans residues 263–283; sequence VYSTSMAMLLTMVLSVYLFNV. Residues 284–286 lie on the Lumenal side of the membrane; that stretch reads RAT.

It belongs to the nucleotide-sugar transporter family. CMP-Sialate:CMP antiporter (TC 2.A.7.12) subfamily. As to expression, expressed in roots, leaves and stalks.

The protein localises to the golgi apparatus membrane. Its function is as follows. Sugar transporter involved in the transport of CMP-sialic acid from the cytoplasm into the Golgi. May transport important nucleotide sugars such as CMP-Kdo (2-keto-3-deoxy-D-manno-octulosonic acid) in physiological conditions. This chain is CMP-sialic acid transporter 1, found in Oryza sativa subsp. japonica (Rice).